The sequence spans 238 residues: uncharacterized protein (238 aa).

A run of 7 helical transmembrane segments spans residues 15 to 37 (FGAL…VLLP), 50 to 69 (ARAG…CGTL), 79 to 96 (LPFH…LYFI), 101 to 118 (IFFN…VAVL), 128 to 150 (ILYA…FSLL), 163 to 183 (CAVL…RRLG), and 203 to 225 (FFVY…YLPF).

Its subcellular location is the cell membrane. This is an uncharacterized protein from Treponema pallidum (strain Nichols).